The primary structure comprises 172 residues: Adenine phosphoribosyltransferase (172 aa).

This sequence belongs to the purine/pyrimidine phosphoribosyltransferase family. In terms of assembly, homodimer.

The protein resides in the cytoplasm. It carries out the reaction AMP + diphosphate = 5-phospho-alpha-D-ribose 1-diphosphate + adenine. It functions in the pathway purine metabolism; AMP biosynthesis via salvage pathway; AMP from adenine: step 1/1. Its function is as follows. Catalyzes a salvage reaction resulting in the formation of AMP, that is energically less costly than de novo synthesis. The protein is Adenine phosphoribosyltransferase of Clostridium botulinum (strain Eklund 17B / Type B).